The following is a 274-amino-acid chain: Cytochrome b-c1 complex subunit Rieske, mitochondrial (274 aa).

At 79 to 103 (SHTDIKVPDFSDYRRPEVLDSTKSS) the chain is on the mitochondrial matrix side. The helical transmembrane segment at 104 to 140 (KESSEARKGFSYLVTATTTVGVAYAAKNVVSQFVSSM) threads the bilayer. Residues 141 to 274 (SASADVLAMS…FTSDDMVIVG (134 aa)) lie on the Mitochondrial intermembrane side of the membrane. The Rieske domain occupies 187 to 272 (EAAVEVSQLR…YEFTSDDMVI (86 aa)). The [2Fe-2S] cluster site is built by Cys217, His219, Cys236, His239, and Ser241. Cys222 and Cys238 are oxidised to a cystine.

The protein belongs to the Rieske iron-sulfur protein family. In terms of assembly, component of the ubiquinol-cytochrome c oxidoreductase (cytochrome b-c1 complex, complex III, CIII), a multisubunit enzyme composed of 11 subunits. The complex is composed of 3 respiratory subunits cytochrome b, cytochrome c1 and Rieske protein UQCRFS1, 2 core protein subunits UQCRC1/QCR1 and UQCRC2/QCR2, and 6 low-molecular weight protein subunits UQCRH/QCR6, UQCRB/QCR7, UQCRQ/QCR8, UQCR10/QCR9, UQCR11/QCR10 and subunit 9, the cleavage product of Rieske protein UQCRFS1. The complex exists as an obligatory dimer and forms supercomplexes (SCs) in the inner mitochondrial membrane with NADH-ubiquinone oxidoreductase (complex I, CI) and cytochrome c oxidase (complex IV, CIV), resulting in different assemblies (supercomplex SCI(1)III(2)IV(1) and megacomplex MCI(2)III(2)IV(2)). Incorporation of the Rieske protein UQCRFS1 is the penultimate step in complex III assembly. Interacts with TTC19, which is involved in the clearance of UQCRFS1 fragments. As to quaternary structure, component of the ubiquinol-cytochrome c oxidoreductase (cytochrome b-c1 complex, complex III, CIII). Subunit 9 corresponds to the mitochondrial targeting sequence (MTS) of Rieske protein UQCRFS1. It is retained after processing and incorporated inside complex III, where it remains bound to the complex and localizes between the 2 core subunits UQCRC1/QCR1 and UQCRC2/QCR2. Requires [2Fe-2S] cluster as cofactor. Post-translationally, proteolytic processing is necessary for the correct insertion of UQCRFS1 in the complex III dimer. Several fragments are generated during UQCRFS1 insertion, most probably due to the endogenous matrix-processing peptidase (MPP) activity of the 2 core protein subunits UQCRC1/QCR1 and UQCRC2/QCR2, which are homologous to the 2 mitochondrial-processing peptidase (MPP) subunits beta-MPP and alpha-MPP respectively. The action of the protease is also necessary for the clearance of the UQCRFS1 fragments.

It localises to the mitochondrion inner membrane. It carries out the reaction a quinol + 2 Fe(III)-[cytochrome c](out) = a quinone + 2 Fe(II)-[cytochrome c](out) + 2 H(+)(out). Component of the ubiquinol-cytochrome c oxidoreductase, a multisubunit transmembrane complex that is part of the mitochondrial electron transport chain which drives oxidative phosphorylation. The respiratory chain contains 3 multisubunit complexes succinate dehydrogenase (complex II, CII), ubiquinol-cytochrome c oxidoreductase (cytochrome b-c1 complex, complex III, CIII) and cytochrome c oxidase (complex IV, CIV), that cooperate to transfer electrons derived from NADH and succinate to molecular oxygen, creating an electrochemical gradient over the inner membrane that drives transmembrane transport and the ATP synthase. The cytochrome b-c1 complex catalyzes electron transfer from ubiquinol to cytochrome c, linking this redox reaction to translocation of protons across the mitochondrial inner membrane, with protons being carried across the membrane as hydrogens on the quinol. In the process called Q cycle, 2 protons are consumed from the matrix, 4 protons are released into the intermembrane space and 2 electrons are passed to cytochrome c. The Rieske protein is a catalytic core subunit containing a [2Fe-2S] iron-sulfur cluster. It cycles between 2 conformational states during catalysis to transfer electrons from the quinol bound in the Q(0) site in cytochrome b to cytochrome c1. Incorporation of UQCRFS1 is the penultimate step in complex III assembly. Functionally, component of the ubiquinol-cytochrome c oxidoreductase (cytochrome b-c1 complex, complex III, CIII). UQCRFS1 undergoes proteolytic processing once it is incorporated in the complex III dimer. One of the fragments, called subunit 9, corresponds to its mitochondrial targeting sequence (MTS). The proteolytic processing is necessary for the correct insertion of UQCRFS1 in the complex III dimer, but the persistence of UQCRFS1-derived fragments may prevent newly imported UQCRFS1 to be processed and assembled into complex III and is detrimental for the complex III structure and function. This is Cytochrome b-c1 complex subunit Rieske, mitochondrial (UQCRFS1) from Bos taurus (Bovine).